The primary structure comprises 348 residues: NADH-ubiquinone oxidoreductase chain 2 (348 aa).

11 consecutive transmembrane segments (helical) span residues 1–21 (MNPYVLMILMSSLGLGTTLTF), 25–45 (HWILAWMGLEINTLAIVPLMA), 60–80 (FLIQAAAAAMILFTSTTNAWI), 99–119 (MFALALKIGLAPMHFWLPEVL), 124–144 (LLTGLILSTWQKLAPMALIIQ), 151–171 (PLILTSLGIASSLIGGWSGLN), 178–197 (ILAYSSIAHMGWMIIVIQYA), 202–224 (LIALGTYIFMTSAAFLTLKVLSA), 239–259 (ILAAIATLVMLSLGGLPPLTG), 274–294 (DLPATATIMALTALLSLFFYL), and 326–346 (LTISVTVTMGLLPLTPAILML).

Belongs to the complex I subunit 2 family. In terms of assembly, core subunit of respiratory chain NADH dehydrogenase (Complex I) which is composed of 45 different subunits.

The protein localises to the mitochondrion inner membrane. It carries out the reaction a ubiquinone + NADH + 5 H(+)(in) = a ubiquinol + NAD(+) + 4 H(+)(out). Its function is as follows. Core subunit of the mitochondrial membrane respiratory chain NADH dehydrogenase (Complex I) which catalyzes electron transfer from NADH through the respiratory chain, using ubiquinone as an electron acceptor. Essential for the catalytic activity and assembly of complex I. The chain is NADH-ubiquinone oxidoreductase chain 2 (mt-nd2) from Danio rerio (Zebrafish).